The sequence spans 170 residues: Probable inosine/xanthosine triphosphatase (170 aa).

7-12 (TTNPVK) contacts substrate. D37 lines the Mg(2+) pocket.

This sequence belongs to the YjjX NTPase family. In terms of assembly, homodimer. The cofactor is Mg(2+). Mn(2+) serves as cofactor.

It catalyses the reaction XTP + H2O = XDP + phosphate + H(+). It carries out the reaction ITP + H2O = IDP + phosphate + H(+). Phosphatase that hydrolyzes non-canonical purine nucleotides such as XTP and ITP to their respective diphosphate derivatives. Probably excludes non-canonical purines from DNA/RNA precursor pool, thus preventing their incorporation into DNA/RNA and avoiding chromosomal lesions. The chain is Probable inosine/xanthosine triphosphatase from Methanopyrus kandleri (strain AV19 / DSM 6324 / JCM 9639 / NBRC 100938).